The primary structure comprises 149 residues: 3-dehydroquinate dehydratase (149 aa).

Tyrosine 26 acts as the Proton acceptor in catalysis. Asparagine 75, histidine 81, and aspartate 88 together coordinate substrate. The Proton donor role is filled by histidine 101. Substrate is bound by residues 102–103 and arginine 112; that span reads LS.

It belongs to the type-II 3-dehydroquinase family. Homododecamer.

The enzyme catalyses 3-dehydroquinate = 3-dehydroshikimate + H2O. It participates in metabolic intermediate biosynthesis; chorismate biosynthesis; chorismate from D-erythrose 4-phosphate and phosphoenolpyruvate: step 3/7. Functionally, catalyzes a trans-dehydration via an enolate intermediate. The polypeptide is 3-dehydroquinate dehydratase (Shewanella woodyi (strain ATCC 51908 / MS32)).